We begin with the raw amino-acid sequence, 95 residues long: Aspartyl/glutamyl-tRNA(Asn/Gln) amidotransferase subunit C (95 aa).

It belongs to the GatC family. As to quaternary structure, heterotrimer of A, B and C subunits.

It catalyses the reaction L-glutamyl-tRNA(Gln) + L-glutamine + ATP + H2O = L-glutaminyl-tRNA(Gln) + L-glutamate + ADP + phosphate + H(+). It carries out the reaction L-aspartyl-tRNA(Asn) + L-glutamine + ATP + H2O = L-asparaginyl-tRNA(Asn) + L-glutamate + ADP + phosphate + 2 H(+). Its function is as follows. Allows the formation of correctly charged Asn-tRNA(Asn) or Gln-tRNA(Gln) through the transamidation of misacylated Asp-tRNA(Asn) or Glu-tRNA(Gln) in organisms which lack either or both of asparaginyl-tRNA or glutaminyl-tRNA synthetases. The reaction takes place in the presence of glutamine and ATP through an activated phospho-Asp-tRNA(Asn) or phospho-Glu-tRNA(Gln). This chain is Aspartyl/glutamyl-tRNA(Asn/Gln) amidotransferase subunit C, found in Brucella anthropi (strain ATCC 49188 / DSM 6882 / CCUG 24695 / JCM 21032 / LMG 3331 / NBRC 15819 / NCTC 12168 / Alc 37) (Ochrobactrum anthropi).